Here is a 706-residue protein sequence, read N- to C-terminus: Putative pentatricopeptide repeat-containing protein At3g47840 (706 aa).

16 PPR repeats span residues 39–69, 70–104, 107–141, 142–172, 173–203, 208–242, 243–273, 274–308, 309–343, 344–374, 375–409, 410–444, 445–475, 476–510, 511–541, and 547–577; these read VKFD…MPHG, DIVS…DHAV, DTSV…SLLS, SVYV…MPFR, NAVT…MSRS, DTYT…GFVT, TLCV…MSER, DVVS…QVPP, NEQT…GLND, SLSV…MRCR, DIIS…GTKP, TDFA…GLEQ, NSTV…TDRD, DIVS…GFRP, DSVT…MQET, and AKEH…MSWK. The tract at residues 582-657 is type E motif; the sequence is VWTTLLIACK…EPGWSSIKIK (76 aa). The segment at 658–688 is type E(+) motif; that stretch reads DCVSAFVSGDRFHPQSEDIYNILELAVSGAE.

This sequence belongs to the PPR family. PCMP-E subfamily.

The protein is Putative pentatricopeptide repeat-containing protein At3g47840 (PCMP-E43) of Arabidopsis thaliana (Mouse-ear cress).